Here is a 281-residue protein sequence, read N- to C-terminus: Tryptophan 2,3-dioxygenase (281 aa).

Residues 50–54 (FIIQH), Tyr112, and Arg116 contribute to the substrate site. His239 lines the heme pocket. Residue Thr253 coordinates substrate.

It belongs to the tryptophan 2,3-dioxygenase family. As to quaternary structure, homotetramer. It depends on heme as a cofactor.

It carries out the reaction L-tryptophan + O2 = N-formyl-L-kynurenine. The protein operates within amino-acid degradation; L-tryptophan degradation via kynurenine pathway; L-kynurenine from L-tryptophan: step 1/2. Heme-dependent dioxygenase that catalyzes the oxidative cleavage of the L-tryptophan (L-Trp) pyrrole ring and converts L-tryptophan to N-formyl-L-kynurenine. Catalyzes the oxidative cleavage of the indole moiety. The protein is Tryptophan 2,3-dioxygenase of Saccharopolyspora erythraea (strain ATCC 11635 / DSM 40517 / JCM 4748 / NBRC 13426 / NCIMB 8594 / NRRL 2338).